The sequence spans 3432 residues: Genome polyprotein (3432 aa).

The interval 2–15 is interaction with host EXOC1; sequence TKKPGGPGKNRAIN. Residues 2 to 109 lie on the Cytoplasmic side of the membrane; it reads TKKPGGPGKN…KKQNKRGGNE (108 aa). Residues 37–72 form a hydrophobic; homodimerization of capsid protein C region; it reads LLDGRGPVRFVLALITFFKFTALAPTKALLGRWRAV. Positions 106–127 are cleaved as a propeptide — ER anchor for the capsid protein C, removed in mature form by serine protease NS3; it reads GGNESSIMWLASLAIVIACAGA. Residues 110–130 traverse the membrane as a helical segment; it reads SSIMWLASLAIVIACAGAMKL. Topologically, residues 131–253 are extracellular; it reads SNFQGKLLMT…ATRYLMKTEN (123 aa). An N-linked (GlcNAc...) asparagine; by host glycan is attached at asparagine 142. A helical transmembrane segment spans residues 254–274; it reads WIIRNPGYAFLAAALGWMLGS. At 275 to 279 the chain is on the cytoplasmic side; the sequence is NSGQR. Residues 280 to 294 form a helical membrane-spanning segment; the sequence is VVFTILLLLVAPAYS. Topologically, residues 295–746 are extracellular; sequence FNCLGMGNRD…QVFGGAFRTL (452 aa). Cystine bridges form between cysteine 297/cysteine 324, cysteine 354/cysteine 410, cysteine 354/cysteine 415, cysteine 368/cysteine 399, cysteine 386/cysteine 410, and cysteine 386/cysteine 415. A fusion peptide region spans residues 392–405; it reads DRGWGNGCGLFGKG. The N-linked (GlcNAc...) asparagine; by host glycan is linked to asparagine 448. Cystine bridges form between cysteine 484-cysteine 581 and cysteine 598-cysteine 629. Residues 747-767 form a helical membrane-spanning segment; the sequence is FGGMSWITQGLMGALLLWMGV. The Cytoplasmic portion of the chain corresponds to 768 to 773; it reads NARDRS. A helical transmembrane segment spans residues 774 to 794; sequence IALAFLATGGVLVFLATNVHA. Residues 795 to 1219 lie on the Extracellular side of the membrane; that stretch reads DTGCAIDITR…AFAEANSGGD (425 aa). 6 disulfides stabilise this stretch: cysteine 798–cysteine 809, cysteine 849–cysteine 937, cysteine 973–cysteine 1017, cysteine 1074–cysteine 1123, cysteine 1085–cysteine 1106, and cysteine 1107–cysteine 1110. Asparagine 924 and asparagine 1001 each carry an N-linked (GlcNAc...) asparagine; by host glycan. A helical membrane pass occupies residues 1220–1240; it reads VLHLALIAVFKIQPAFLVMNM. Residues 1241 to 1250 are Cytoplasmic-facing; that stretch reads LSARWTNQEN. Residues 1251-1271 form a helical membrane-spanning segment; sequence MVLVLGAAFFQLASVDLQIGV. Residue histidine 1272 is a topological domain, lumenal. The helical transmembrane segment at 1273-1293 threads the bilayer; that stretch reads GILNAAAIAWMIVRAITFPTT. Residues 1294-1309 lie on the Cytoplasmic side of the membrane; it reads STVAMPVLALLTPGMR. The helical transmembrane segment at 1310–1330 threads the bilayer; sequence ALYLDTYRIILLVIGICSLLQ. The Lumenal portion of the chain corresponds to 1331-1341; that stretch reads ERRKTMAKKKG. A helical transmembrane segment spans residues 1342–1362; it reads AVLLGLALTSTGWFSPTTIAA. At 1363–1374 the chain is on the cytoplasmic side; it reads GLMVCNPNKKRG. A helical transmembrane segment spans residues 1375-1395; sequence WPATEFLSAVGLMFAIVGGLA. The Lumenal segment spans residues 1396-1398; it reads ELD. A helical membrane pass occupies residues 1399-1419; the sequence is IESMSIPFMLAGLMAVSYVIS. Residues 1420–1476 lie on the Cytoplasmic side of the membrane; that stretch reads GKATDMWLDRAADISWEMEAAITGSSRRLDVKLDDDGDFHLIDDPGVPWKVWLLRMS. Positions 1427–1466 are interacts with and activates NS3 protease; it reads LDRAADISWEMEAAITGSSRRLDVKLDDDGDFHLIDDPGV. Residues 1477–1497 constitute an intramembrane region (helical); the sequence is CIGLAALTPWAIVPAAFGYWL. Residues 1498–2173 are Cytoplasmic-facing; it reads TLKTTKRGGV…RMALEELPDA (676 aa). The Peptidase S7 domain maps to 1505-1682; that stretch reads GGVFWDTPSP…DRQEEPVPDA (178 aa). Active-site charge relay system; for serine protease NS3 activity residues include histidine 1555, aspartate 1579, and serine 1639. In terms of domain architecture, Helicase ATP-binding spans 1685 to 1841; sequence PSMLKKRQMT…DSNAPIHDLQ (157 aa). Positions 1689-1692 are important for RNA-binding; it reads KKRQ. 1698–1705 is an ATP binding site; sequence LHPGSGKT. A DEAH box motif is present at residues 1789 to 1792; the sequence is DEAH. The Helicase C-terminal domain maps to 1852–2017; that stretch reads GYEWITEYAG…GLVAQLYGPE (166 aa). At lysine 1893 the chain carries N6-acetyllysine; by host. The disordered stretch occupies residues 1950–1969; it reads NPSPITSASAAQRRGRVGRN. Residues 2168–2172 are regulates the ATPase activity of NS3 helicase; sequence EELPD. The chain crosses the membrane as a helical span at residues 2174–2194; the sequence is LETITLIVAITVMTGGFFLLM. The Lumenal segment spans residues 2195–2199; it reads MQRKG. An intramembrane region (helical) is located at residues 2200–2220; sequence IGKMGLGALVLTLATFFLWAA. Residue glutamate 2221 is a topological domain, lumenal. The chain crosses the membrane as a helical span at residues 2222-2242; sequence VPGTKIAGTLLVALLLMVVLI. Residues 2243–2257 are Cytoplasmic-facing; it reads PEPEKQRSQTDNQLA. A helical transmembrane segment spans residues 2258-2278; that stretch reads VFLICVLTVVGVVAANEYGML. The Lumenal segment spans residues 2279-2311; the sequence is EKTKADLKSMFGGRTQAPGLTGLPSMALDLRPA. Positions 2312-2332 form an intramembrane region, helical; that stretch reads TAWALYGGSTVVLTPLLKHLI. Over 2333–2368 the chain is Lumenal; the sequence is TSEYVTTSLASISSQAGSLFVLPRGVPFTDLDLTVG. The helical transmembrane segment at 2369 to 2389 threads the bilayer; the sequence is LVFLGCWGQITLTTFLTAMVL. The Cytoplasmic portion of the chain corresponds to 2390-2444; the sequence is VTLHYGYMLPGWQAEALRAAQRRTAAGIMKNAVVDGMVATDVPELERTTPLMQKK. The helical transmembrane segment at 2445 to 2465 threads the bilayer; that stretch reads VGQVLLIGVSVAAFLVNPNVT. The Lumenal portion of the chain corresponds to 2466–2469; it reads TVRE. A helical membrane pass occupies residues 2470 to 2490; it reads AGVLVTAATLTLWDNGASAVW. Residues 2491 to 3432 lie on the Cytoplasmic side of the membrane; sequence NSTTATGLCH…DVLIQEDRVI (942 aa). The mRNA cap 0-1 NS5-type MT domain maps to 2528–2793; it reads GRPGGRTLGE…DVNLGSGTRA (266 aa). S-adenosyl-L-methionine is bound at residue serine 2583. Serine 2583 carries the post-translational modification Phosphoserine. Lysine 2588 acts as the For 2'-O-MTase activity in catalysis. The S-adenosyl-L-methionine site is built by glycine 2613, tryptophan 2614, threonine 2631, lysine 2632, aspartate 2658, and valine 2659. The active-site For 2'-O-MTase activity is aspartate 2673. Isoleucine 2674 lines the S-adenosyl-L-methionine pocket. Active-site for 2'-O-MTase activity residues include lysine 2709 and glutamate 2745. Tyrosine 2747 is an S-adenosyl-L-methionine binding site. Zn(2+) contacts are provided by glutamate 2967, histidine 2971, cysteine 2976, and cysteine 2979. In terms of domain architecture, RdRp catalytic spans 3057 to 3209; that stretch reads GKMYADDTAG…KPLDDRFATA (153 aa). Zn(2+)-binding residues include histidine 3244, cysteine 3260, and cysteine 3379.

This sequence in the N-terminal section; belongs to the class I-like SAM-binding methyltransferase superfamily. mRNA cap 0-1 NS5-type methyltransferase family. Homodimer. Interacts (via N-terminus) with host EXOC1 (via C-terminus); this interaction results in EXOC1 degradation through the proteasome degradation pathway. As to quaternary structure, forms heterodimers with envelope protein E in the endoplasmic reticulum and Golgi. In terms of assembly, homodimer; in the endoplasmic reticulum and Golgi. Interacts with protein prM. Interacts with non-structural protein 1. Interacts with host HSPA5. Homodimer; Homohexamer when secreted. Interacts with envelope protein E. NS1 interacts with NS4B. Interacts with host complement protein CFH; this interaction leads to the degradation of C3. As to quaternary structure, interacts (via N-terminus) with serine protease NS3. In terms of assembly, forms a heterodimer with serine protease NS3. May form homooligomers. Forms a heterodimer with NS2B. Interacts with non-structural protein 2A (via N-terminus). Interacts with NS4B. Interacts with unphosphorylated RNA-directed RNA polymerase NS5; this interaction stimulates RNA-directed RNA polymerase NS5 guanylyltransferase activity. Interacts with host ILF2. As to quaternary structure, interacts with serine protease NS3. In terms of assembly, homodimer. Interacts with host STAT2; this interaction inhibits the phosphorylation of the latter, and, when all viral proteins are present (polyprotein), targets STAT2 for degradation. Interacts with serine protease NS3. The cofactor is Mn(2+). Mg(2+) serves as cofactor. In terms of processing, specific enzymatic cleavages in vivo yield mature proteins. Cleavages in the lumen of endoplasmic reticulum are performed by host signal peptidase, whereas cleavages in the cytoplasmic side are performed by serine protease NS3. Signal cleavage at the 2K-4B site requires a prior NS3 protease-mediated cleavage at the 4A-2K site. Post-translationally, cleaved in post-Golgi vesicles by a host furin, releasing the mature small envelope protein M, and peptide pr. This cleavage is incomplete as up to 30% of viral particles still carry uncleaved prM. N-glycosylated. In terms of processing, N-glycosylated. The excreted form is glycosylated and this is required for efficient secretion of the protein from infected cells. Post-translationally, acetylated by host KAT5. Acetylation modulates NS3 RNA-binding and unwinding activities and plays an important positive role for viral replication. Phosphorylated on serines residues. This phosphorylation may trigger NS5 nuclear localization.

The protein localises to the host endoplasmic reticulum membrane. Its subcellular location is the virion. It is found in the host nucleus. The protein resides in the host cytoplasm. It localises to the host perinuclear region. The protein localises to the secreted. Its subcellular location is the virion membrane. It is found in the host cell surface. It carries out the reaction Selective hydrolysis of -Xaa-Xaa-|-Yaa- bonds in which each of the Xaa can be either Arg or Lys and Yaa can be either Ser or Ala.. The enzyme catalyses a ribonucleoside 5'-triphosphate + H2O = a ribonucleoside 5'-diphosphate + phosphate + H(+). The catalysed reaction is RNA(n) + a ribonucleoside 5'-triphosphate = RNA(n+1) + diphosphate. It catalyses the reaction ATP + H2O = ADP + phosphate + H(+). It carries out the reaction a 5'-end (5'-triphosphoguanosine)-ribonucleoside in mRNA + S-adenosyl-L-methionine = a 5'-end (N(7)-methyl 5'-triphosphoguanosine)-ribonucleoside in mRNA + S-adenosyl-L-homocysteine. The enzyme catalyses a 5'-end (N(7)-methyl 5'-triphosphoguanosine)-ribonucleoside in mRNA + S-adenosyl-L-methionine = a 5'-end (N(7)-methyl 5'-triphosphoguanosine)-(2'-O-methyl-ribonucleoside) in mRNA + S-adenosyl-L-homocysteine + H(+). Its function is as follows. Plays a role in virus budding by binding to the cell membrane and gathering the viral RNA into a nucleocapsid that forms the core of a mature virus particle. During virus entry, may induce genome penetration into the host cytoplasm after hemifusion induced by the surface proteins. Can migrate to the cell nucleus where it modulates host functions. Overcomes the anti-viral effects of host EXOC1 by sequestering and degrading the latter through the proteasome degradation pathway. Functionally, inhibits RNA silencing by interfering with host Dicer. Prevents premature fusion activity of envelope proteins in trans-Golgi by binding to envelope protein E at pH6.0. After virion release in extracellular space, gets dissociated from E dimers. In terms of biological role, acts as a chaperone for envelope protein E during intracellular virion assembly by masking and inactivating envelope protein E fusion peptide. prM is the only viral peptide matured by host furin in the trans-Golgi network probably to avoid catastrophic activation of the viral fusion activity in acidic Golgi compartment prior to virion release. prM-E cleavage is inefficient, and many virions are only partially matured. These uncleaved prM would play a role in immune evasion. Its function is as follows. May play a role in virus budding. Exerts cytotoxic effects by activating a mitochondrial apoptotic pathway through M ectodomain. May display a viroporin activity. Functionally, binds to host cell surface receptor and mediates fusion between viral and cellular membranes. Efficient virus attachment to cell is, at least in part, mediated by host HSPA5. Envelope protein is synthesized in the endoplasmic reticulum in the form of heterodimer with protein prM. They play a role in virion budding in the ER, and the newly formed immature particle is covered with 60 spikes composed of heterodimer between precursor prM and envelope protein E. The virion is transported to the Golgi apparatus where the low pH causes dissociation of PrM-E heterodimers and formation of E homodimers. prM-E cleavage is inefficient, and many virions are only partially matured. These uncleaved prM would play a role in immune evasion. Involved in immune evasion, pathogenesis and viral replication. Once cleaved off the polyprotein, is targeted to three destinations: the viral replication cycle, the plasma membrane and the extracellular compartment. Essential for viral replication. Required for formation of the replication complex and recruitment of other non-structural proteins to the ER-derived membrane structures. Excreted as a hexameric lipoparticle that plays a role against host immune response. Antagonizing the complement function. Binds to the host macrophages and dendritic cells. Inhibits signal transduction originating from Toll-like receptor 3 (TLR3). In terms of biological role, component of the viral RNA replication complex that functions in virion assembly and antagonizes the host alpha/beta interferon antiviral response. Its function is as follows. Required cofactor for the serine protease function of NS3. May have membrane-destabilizing activity and form viroporins. Functionally, displays three enzymatic activities: serine protease, NTPase and RNA helicase. NS3 serine protease, in association with NS2B, performs its autocleavage and cleaves the polyprotein at dibasic sites in the cytoplasm: C-prM, NS2A-NS2B, NS2B-NS3, NS3-NS4A, NS4A-2K and NS4B-NS5. NS3 RNA helicase binds RNA and unwinds dsRNA in the 3' to 5' direction. Regulates the ATPase activity of the NS3 helicase activity. NS4A allows NS3 helicase to conserve energy during unwinding. In terms of biological role, functions as a signal peptide for NS4B and is required for the interferon antagonism activity of the latter. Its function is as follows. Induces the formation of ER-derived membrane vesicles where the viral replication takes place. Inhibits interferon (IFN)-induced host STAT1 phosphorylation and nuclear translocation, thereby preventing the establishment of cellular antiviral state by blocking the IFN-alpha/beta pathway. Inhibits STAT2 translocation in the nucleus after IFN-alpha treatment. Functionally, replicates the viral (+) and (-) RNA genome. Performs the capping of genomes in the cytoplasm. NS5 methylates viral RNA cap at guanine N-7 and ribose 2'-O positions. Besides its role in RNA genome replication, also prevents the establishment of cellular antiviral state by blocking the interferon-alpha/beta (IFN-alpha/beta) signaling pathway. Inhibits host TYK2 and STAT2 phosphorylation, thereby preventing activation of JAK-STAT signaling pathway. This chain is Genome polyprotein, found in Japanese encephalitis virus (strain M28) (JEV).